A 240-amino-acid chain; its full sequence is ATP-dependent dethiobiotin synthetase BioD 1 (240 aa).

Position 13–18 (13–18) interacts with ATP; the sequence is DVGKTV. Thr17 contributes to the Mg(2+) binding site. Residue Lys38 is part of the active site. Ser42 is a substrate binding site. Residues Asp55, 116 to 119, 176 to 177, 205 to 207, and Glu212 contribute to the ATP site; these read EGAG, NE, and PYL. Mg(2+) contacts are provided by Asp55 and Glu116.

Belongs to the dethiobiotin synthetase family. In terms of assembly, homodimer. Mg(2+) is required as a cofactor.

It is found in the cytoplasm. It catalyses the reaction (7R,8S)-7,8-diammoniononanoate + CO2 + ATP = (4R,5S)-dethiobiotin + ADP + phosphate + 3 H(+). It functions in the pathway cofactor biosynthesis; biotin biosynthesis; biotin from 7,8-diaminononanoate: step 1/2. In terms of biological role, catalyzes a mechanistically unusual reaction, the ATP-dependent insertion of CO2 between the N7 and N8 nitrogen atoms of 7,8-diaminopelargonic acid (DAPA, also called 7,8-diammoniononanoate) to form a ureido ring. In Yersinia pestis, this protein is ATP-dependent dethiobiotin synthetase BioD 1.